Consider the following 367-residue polypeptide: Molybdenum import ATP-binding protein ModC (367 aa).

Residues 1 to 234 enclose the ABC transporter domain; the sequence is MSSAALEVRL…PALSGGFGHE (234 aa). 33–40 provides a ligand contact to ATP; sequence GPSGAGKS. Residues 293–366 enclose the Mop domain; that stretch reads HISLHNILPV…IKSVAVDVLG (74 aa).

It belongs to the ABC transporter superfamily. Molybdate importer (TC 3.A.1.8) family. The complex is composed of two ATP-binding proteins (ModC), two transmembrane proteins (ModB) and a solute-binding protein (ModA).

It is found in the cell inner membrane. The catalysed reaction is molybdate(out) + ATP + H2O = molybdate(in) + ADP + phosphate + H(+). Part of the ABC transporter complex ModABC involved in molybdenum import. Responsible for energy coupling to the transport system. This chain is Molybdenum import ATP-binding protein ModC, found in Granulibacter bethesdensis (strain ATCC BAA-1260 / CGDNIH1).